A 264-amino-acid chain; its full sequence is Type III pantothenate kinase (264 aa).

An ATP-binding site is contributed by 6–13 (DVGNTNIK). Residue 108–111 (GSDR) participates in substrate binding. The Proton acceptor role is filled by D110. ATP is bound at residue T134.

Belongs to the type III pantothenate kinase family. In terms of assembly, homodimer. NH4(+) is required as a cofactor. K(+) serves as cofactor.

The protein resides in the cytoplasm. It catalyses the reaction (R)-pantothenate + ATP = (R)-4'-phosphopantothenate + ADP + H(+). It participates in cofactor biosynthesis; coenzyme A biosynthesis; CoA from (R)-pantothenate: step 1/5. Its function is as follows. Catalyzes the phosphorylation of pantothenate (Pan), the first step in CoA biosynthesis. This chain is Type III pantothenate kinase, found in Ehrlichia canis (strain Jake).